The following is a 633-amino-acid chain: Probable methyltransferase PMT17 (633 aa).

Residues 1–18 lie on the Cytoplasmic side of the membrane; sequence MAKENSGHHHQTEARRKK. Residues 19–39 traverse the membrane as a helical; Signal-anchor for type II membrane protein segment; the sequence is LTLILGVSGLCILFYVLGAWQ. Topologically, residues 40-633 are lumenal; that stretch reads ANTVPSSISK…NNNNNNNNNN (594 aa). Positions 50–71 are disordered; that stretch reads LGCETQSNPSSSSSSSSSSESA. Over residues 59-70 the composition is skewed to low complexity; that stretch reads SSSSSSSSSSES. An N-linked (GlcNAc...) asparagine glycan is attached at asparagine 87.

It belongs to the methyltransferase superfamily.

The protein localises to the endoplasmic reticulum membrane. The protein is Probable methyltransferase PMT17 of Arabidopsis thaliana (Mouse-ear cress).